We begin with the raw amino-acid sequence, 228 residues long: Non-specific lipid-transfer protein EPAD1 (228 aa).

The first 24 residues, 1–24 (MERSHLAVLLGLLAFAAGVPAAAA), serve as a signal peptide directing secretion. 3 disulfides stabilise this stretch: Cys-40/Cys-62, Cys-63/Cys-105, and Cys-78/Cys-119. N-linked (GlcNAc...) asparagine glycosylation is present at Asn-94. Residues 124–207 (PPASIVTAPP…PPRSGASSSL (84 aa)) form a disordered region. Pro residues predominate over residues 145-162 (REAPPPPPAAEKLSPPPQ).

Belongs to the plant LTP family. Expressed in young panicles. Specifically expressed in pollen mother cells and young microspores.

Its subcellular location is the cell membrane. Functionally, plant non-specific lipid-transfer protein that binds phospholipids in vitro. Required for correct pollen exine patterning by controlling the continuity and homogeneity of the primexine distribution. This is Non-specific lipid-transfer protein EPAD1 from Oryza sativa subsp. japonica (Rice).